The primary structure comprises 437 residues: Glutamyl-tRNA reductase (437 aa).

Residues 49–52 (TCNR), serine 109, 114–116 (ETQ), and glutamine 120 each bind substrate. Cysteine 50 serves as the catalytic Nucleophile. Residue 189 to 194 (GAGKMS) participates in NADP(+) binding.

It belongs to the glutamyl-tRNA reductase family. As to quaternary structure, homodimer.

It catalyses the reaction (S)-4-amino-5-oxopentanoate + tRNA(Glu) + NADP(+) = L-glutamyl-tRNA(Glu) + NADPH + H(+). The protein operates within porphyrin-containing compound metabolism; protoporphyrin-IX biosynthesis; 5-aminolevulinate from L-glutamyl-tRNA(Glu): step 1/2. Functionally, catalyzes the NADPH-dependent reduction of glutamyl-tRNA(Glu) to glutamate 1-semialdehyde (GSA). The polypeptide is Glutamyl-tRNA reductase (Paenibacillus macerans (Bacillus macerans)).